The chain runs to 307 residues: Sex-lethal homolog (307 aa).

2 RRM domains span residues 85-163 (TNLI…YARP) and 171-251 (TNLY…LAEE). A compositionally biased stretch (basic residues) spans 285-299 (HRGRHNKNRNQKPHP). Positions 285–307 (HRGRHNKNRNQKPHPYHNPQKFI) are disordered.

The protein localises to the nucleus. In terms of biological role, unknown; apparently not involved in somatic sex determination. This is Sex-lethal homolog (SXL) from Chrysomya rufifacies (Hairy maggot blowfly).